We begin with the raw amino-acid sequence, 164 residues long: UPF0304 protein HSM_1818 (164 aa).

The protein belongs to the UPF0304 family.

In Histophilus somni (strain 2336) (Haemophilus somnus), this protein is UPF0304 protein HSM_1818.